A 324-amino-acid polypeptide reads, in one-letter code: Beta-ketoacyl-[acyl-carrier-protein] synthase III (324 aa).

Residues Cys-112 and His-249 contribute to the active site. The interval 250–254 (QANDR) is ACP-binding. The active site involves Asn-279.

It belongs to the thiolase-like superfamily. FabH family. As to quaternary structure, homodimer.

Its subcellular location is the cytoplasm. The catalysed reaction is malonyl-[ACP] + acetyl-CoA + H(+) = 3-oxobutanoyl-[ACP] + CO2 + CoA. Its pathway is lipid metabolism; fatty acid biosynthesis. Functionally, catalyzes the condensation reaction of fatty acid synthesis by the addition to an acyl acceptor of two carbons from malonyl-ACP. Catalyzes the first condensation reaction which initiates fatty acid synthesis and may therefore play a role in governing the total rate of fatty acid production. Possesses both acetoacetyl-ACP synthase and acetyl transacylase activities. Its substrate specificity determines the biosynthesis of branched-chain and/or straight-chain of fatty acids. The polypeptide is Beta-ketoacyl-[acyl-carrier-protein] synthase III (Streptococcus gordonii (strain Challis / ATCC 35105 / BCRC 15272 / CH1 / DL1 / V288)).